Reading from the N-terminus, the 330-residue chain is Probable deoxyhypusine synthase (330 aa).

The disordered stretch occupies residues 1–25 (MTGDDADETHENVVPGSDEDLDTPD). The active-site Nucleophile is Lys298.

Belongs to the deoxyhypusine synthase family. Requires NAD(+) as cofactor.

It carries out the reaction [eIF5A protein]-L-lysine + spermidine = [eIF5A protein]-deoxyhypusine + propane-1,3-diamine. It participates in protein modification; eIF5A hypusination. Its function is as follows. Catalyzes the NAD-dependent oxidative cleavage of spermidine and the subsequent transfer of the butylamine moiety of spermidine to the epsilon-amino group of a specific lysine residue of the eIF-5A precursor protein to form the intermediate deoxyhypusine residue. The polypeptide is Probable deoxyhypusine synthase (Halobacterium salinarum (strain ATCC 29341 / DSM 671 / R1)).